A 152-amino-acid polypeptide reads, in one-letter code: 3-dehydroquinate dehydratase (152 aa).

Y22 acts as the Proton acceptor in catalysis. Substrate is bound by residues N73, H79, and D86. H99 serves as the catalytic Proton donor. Residues 100–101 (LS) and R110 each bind substrate.

The protein belongs to the type-II 3-dehydroquinase family. As to quaternary structure, homododecamer.

It catalyses the reaction 3-dehydroquinate = 3-dehydroshikimate + H2O. Its pathway is metabolic intermediate biosynthesis; chorismate biosynthesis; chorismate from D-erythrose 4-phosphate and phosphoenolpyruvate: step 3/7. Its function is as follows. Catalyzes a trans-dehydration via an enolate intermediate. The sequence is that of 3-dehydroquinate dehydratase from Gemmatimonas aurantiaca (strain DSM 14586 / JCM 11422 / NBRC 100505 / T-27).